Reading from the N-terminus, the 159-residue chain is Cytochrome b6-f complex subunit 4 (159 aa).

The next 3 helical transmembrane spans lie at 36-56 (LLYI…GLAV), 95-115 (LLGV…PFLE), and 131-151 (TVFL…TLPI).

This sequence belongs to the cytochrome b family. PetD subfamily. The 4 large subunits of the cytochrome b6-f complex are cytochrome b6, subunit IV (17 kDa polypeptide, petD), cytochrome f and the Rieske protein, while the 4 small subunits are petG, petL, petM and petN. The complex functions as a dimer.

The protein resides in the plastid. The protein localises to the chloroplast thylakoid membrane. Functionally, component of the cytochrome b6-f complex, which mediates electron transfer between photosystem II (PSII) and photosystem I (PSI), cyclic electron flow around PSI, and state transitions. This chain is Cytochrome b6-f complex subunit 4, found in Piper cenocladum (Ant piper).